The chain runs to 338 residues: Oligopeptide transport ATP-binding protein OppD (338 aa).

The region spanning 7-257 (LEAKQVSVAF…PKHPYTRSLL (251 aa)) is the ABC transporter domain. 43–50 (GESGSGKS) provides a ligand contact to ATP.

This sequence belongs to the ABC transporter superfamily. As to quaternary structure, the complex is composed of two ATP-binding proteins (OppD and OppF), two transmembrane proteins (OppB and OppC) and a solute-binding protein (OppA).

It localises to the cell membrane. It carries out the reaction a [peptide](out) + ATP + H2O = a [peptide](in) + ADP + phosphate + H(+). Functionally, part of the ABC transporter complex OppABCDF involved in the uptake of oligopeptides. Probably responsible for energy coupling to the transport system. Essential for uptake of peptides larger than three amino acids and for growth in milk. This Lactococcus lactis subsp. cremoris (strain SK11) protein is Oligopeptide transport ATP-binding protein OppD.